Reading from the N-terminus, the 806-residue chain is Phenylalanine--tRNA ligase beta subunit (806 aa).

The 116-residue stretch at 40–155 (NKGVKGVVVG…SDAEVGADAL (116 aa)) folds into the tRNA-binding domain. Residues 409 to 484 (VQERTVSVTA…RLYGYDHIPV (76 aa)) enclose the B5 domain. 4 residues coordinate Mg(2+): aspartate 462, aspartate 468, glutamate 471, and glutamate 472. The 94-residue stretch at 712-805 (PRFPSMTRDM…VEEKFGAELR (94 aa)) folds into the FDX-ACB domain.

It belongs to the phenylalanyl-tRNA synthetase beta subunit family. Type 1 subfamily. As to quaternary structure, tetramer of two alpha and two beta subunits. The cofactor is Mg(2+).

It is found in the cytoplasm. It catalyses the reaction tRNA(Phe) + L-phenylalanine + ATP = L-phenylalanyl-tRNA(Phe) + AMP + diphosphate + H(+). In Bacillus cereus (strain ZK / E33L), this protein is Phenylalanine--tRNA ligase beta subunit.